A 457-amino-acid chain; its full sequence is Argininosuccinate lyase (457 aa).

Belongs to the lyase 1 family. Argininosuccinate lyase subfamily.

It localises to the cytoplasm. The catalysed reaction is 2-(N(omega)-L-arginino)succinate = fumarate + L-arginine. It functions in the pathway amino-acid biosynthesis; L-arginine biosynthesis; L-arginine from L-ornithine and carbamoyl phosphate: step 3/3. The protein is Argininosuccinate lyase of Psychrobacter cryohalolentis (strain ATCC BAA-1226 / DSM 17306 / VKM B-2378 / K5).